A 237-amino-acid chain; its full sequence is UPF0173 metal-dependent hydrolase BOV_A0561 (237 aa).

It belongs to the UPF0173 family.

The protein is UPF0173 metal-dependent hydrolase BOV_A0561 of Brucella ovis (strain ATCC 25840 / 63/290 / NCTC 10512).